We begin with the raw amino-acid sequence, 470 residues long: N amino acid transport system protein (470 aa).

The span at 1–11 shows a compositional bias: basic and acidic residues; that stretch reads MDSQYETKKND. The disordered stretch occupies residues 1-21; the sequence is MDSQYETKKNDPNAIMPYPES. The Extracellular segment spans residues 1–56; the sequence is MDSQYETKKNDPNAIMPYPESNDEHVGEVRGLGGGIMDKEPEAQEGHAKFHRLGWK. Helical transmembrane passes span 57–77 and 78–98; these read RLTV…LPGA and FATL…LICI. The Extracellular segment spans residues 99–131; sequence YTAHVIGQTKLKHPEIAHYADVGRVMFGRWGYE. The helical transmembrane segment at 132–152 threads the bilayer; it reads IISFMFVLQLIFIVGSHVLTG. The Cytoplasmic portion of the chain corresponds to 153–168; it reads TIMWGTITDNGNGTCS. 2 helical membrane-spanning segments follow: residues 169–189 and 191–211; these read LVFG…PSFA and VAIL…ITMI. Topologically, residues 212-236 are cytoplasmic; it reads ATGIRSSHQEGGLAAVPWSCWPKED. Residues 237–257 traverse the membrane as a helical segment; sequence LSLAEGFIAVSNIVFAYSFAM. The Extracellular segment spans residues 258-275; that stretch reads CQFSFMDEMHTPSDYKKS. Residues 276–296 form a helical membrane-spanning segment; that stretch reads IVALGLIEIFIYTVTGGVVYA. At 297-316 the chain is on the cytoplasmic side; that stretch reads FVGPEVQSPALLSAGPLLAK. A helical transmembrane segment spans residues 317 to 337; it reads VAFGIALPVIFISGSINTVVV. Over 338-357 the chain is Extracellular; that stretch reads SRYLIERIWPNNVIRYVNTP. Residues 358-378 form a helical membrane-spanning segment; that stretch reads AGWMVWLGFDFGITLIAWVIA. At 379-386 the chain is on the cytoplasmic side; the sequence is EAIPFFSD. A helical membrane pass occupies residues 387–407; it reads LLAICSALFISGFSFYFPALM. At 408–427 the chain is on the extracellular side; it reads YFKITRNDAKSQGKKYFLDA. The chain crosses the membrane as a helical span at residues 428–448; sequence LNMLCFVIGMGILGIGTYAAI. Residues 449–470 are Cytoplasmic-facing; it reads QDIMDRYDHGKVSKPYSCAPLA.

The protein belongs to the amino acid/polyamine transporter 2 family.

It localises to the membrane. In terms of biological role, required for the transport of neutral aliphatic and aromatic amino acids via the N system. The sequence is that of N amino acid transport system protein (mtr) from Neurospora crassa (strain ATCC 24698 / 74-OR23-1A / CBS 708.71 / DSM 1257 / FGSC 987).